A 305-amino-acid polypeptide reads, in one-letter code: UDP-3-O-acyl-N-acetylglucosamine deacetylase (305 aa).

Positions 79, 238, and 242 each coordinate Zn(2+). Histidine 265 acts as the Proton donor in catalysis.

It belongs to the LpxC family. Zn(2+) is required as a cofactor.

The catalysed reaction is a UDP-3-O-[(3R)-3-hydroxyacyl]-N-acetyl-alpha-D-glucosamine + H2O = a UDP-3-O-[(3R)-3-hydroxyacyl]-alpha-D-glucosamine + acetate. It participates in glycolipid biosynthesis; lipid IV(A) biosynthesis; lipid IV(A) from (3R)-3-hydroxytetradecanoyl-[acyl-carrier-protein] and UDP-N-acetyl-alpha-D-glucosamine: step 2/6. In terms of biological role, catalyzes the hydrolysis of UDP-3-O-myristoyl-N-acetylglucosamine to form UDP-3-O-myristoylglucosamine and acetate, the committed step in lipid A biosynthesis. This chain is UDP-3-O-acyl-N-acetylglucosamine deacetylase, found in Colwellia psychrerythraea (strain 34H / ATCC BAA-681) (Vibrio psychroerythus).